Consider the following 335-residue polypeptide: Beta-ketoacyl-[acyl-carrier-protein] synthase III (335 aa).

Active-site residues include Cys116 and His256. Residues 257–261 (QANLR) are ACP-binding. Asn286 is a catalytic residue.

It belongs to the thiolase-like superfamily. FabH family. In terms of assembly, homodimer.

The protein localises to the cytoplasm. The enzyme catalyses malonyl-[ACP] + acetyl-CoA + H(+) = 3-oxobutanoyl-[ACP] + CO2 + CoA. The protein operates within lipid metabolism; fatty acid biosynthesis. In terms of biological role, catalyzes the condensation reaction of fatty acid synthesis by the addition to an acyl acceptor of two carbons from malonyl-ACP. Catalyzes the first condensation reaction which initiates fatty acid synthesis and may therefore play a role in governing the total rate of fatty acid production. Possesses both acetoacetyl-ACP synthase and acetyl transacylase activities. Its substrate specificity determines the biosynthesis of branched-chain and/or straight-chain of fatty acids. The sequence is that of Beta-ketoacyl-[acyl-carrier-protein] synthase III from Porphyromonas gingivalis (strain ATCC 33277 / DSM 20709 / CIP 103683 / JCM 12257 / NCTC 11834 / 2561).